The chain runs to 88 residues: MANNPSQLLPSELIDRCIGSKIWVIMKGDKELVGILKGFDVYVNMVLEDVTEYEITAEGRRVTKLDQILLNGNNIAILVPGGSPEDGE.

N-acetylalanine is present on Ala-2. Residues 9–84 (LPSELIDRCI…IAILVPGGSP (76 aa)) form the Sm domain.

It belongs to the snRNP Sm proteins family. As to quaternary structure, component of the heptameric LSM1-LSM7 complex that forms a seven-membered ring structure with a donut shape. The LSM subunits are arranged in the order LSM1, LSM2, LSM3, LSM6, LSM5, LSM7 and LSM4. Component of the heptameric LSM2-LSM8 complex that forms a seven-membered ring structure with a donut shape. The LSM subunits are arranged in the order LSM8, LSM2, LSM3, LSM6, LSM5, LSM7 and LSM4. LSM2 subunit interacts only with its two neighboring subunits, LSM6A or LSM6B and LSM7. In terms of tissue distribution, expressed in roots, leaves, stems, flowers and siliques.

Its subcellular location is the cytoplasm. It localises to the nucleus. Its function is as follows. Component of LSM protein complexes, which are involved in RNA processing. Component of the cytoplasmic LSM1-LSM7 complex which is involved in mRNA degradation by promoting decapping and leading to accurate 5'-3' mRNA decay. The cytoplasmic LSM1-LSM7 complex regulates developmental gene expression by the decapping of specific development-related transcripts. Component of the nuclear LSM2-LSM8 complex which is involved splicing nuclear mRNAs. LSM2-LSM8 binds directly to the U6 small nuclear RNAs (snRNAs) and is essential for accurate splicing of selected development-related mRNAs through the stabilization of the spliceosomal U6 snRNA. Plays a critical role in the regulation of development-related gene expression. Involved in the control of plant sensitivity to abscisic acid (ABA) and drought. Functions with ABH1 as negative regulator of ABA signaling in guard cells. Required for regulation of splicing efficiency of many stress-responsive genes under stress conditions. The protein is Sm-like protein LSM5 of Arabidopsis thaliana (Mouse-ear cress).